Consider the following 313-residue polypeptide: Ribosomal RNA small subunit methyltransferase H (313 aa).

S-adenosyl-L-methionine-binding positions include 35 to 37, aspartate 55, phenylalanine 79, aspartate 101, and glutamine 108; that span reads GGH.

This sequence belongs to the methyltransferase superfamily. RsmH family.

The protein localises to the cytoplasm. The enzyme catalyses cytidine(1402) in 16S rRNA + S-adenosyl-L-methionine = N(4)-methylcytidine(1402) in 16S rRNA + S-adenosyl-L-homocysteine + H(+). Its function is as follows. Specifically methylates the N4 position of cytidine in position 1402 (C1402) of 16S rRNA. The protein is Ribosomal RNA small subunit methyltransferase H of Erwinia tasmaniensis (strain DSM 17950 / CFBP 7177 / CIP 109463 / NCPPB 4357 / Et1/99).